A 346-amino-acid chain; its full sequence is tRNA N6-adenosine threonylcarbamoyltransferase (346 aa).

Fe cation is bound by residues His-110 and His-114. Residues 132 to 136 (LLSGG), Asp-165, Gly-178, and Asn-274 each bind substrate. Asp-298 provides a ligand contact to Fe cation.

This sequence belongs to the KAE1 / TsaD family. Fe(2+) is required as a cofactor.

The protein resides in the cytoplasm. The enzyme catalyses L-threonylcarbamoyladenylate + adenosine(37) in tRNA = N(6)-L-threonylcarbamoyladenosine(37) in tRNA + AMP + H(+). Required for the formation of a threonylcarbamoyl group on adenosine at position 37 (t(6)A37) in tRNAs that read codons beginning with adenine. Is involved in the transfer of the threonylcarbamoyl moiety of threonylcarbamoyl-AMP (TC-AMP) to the N6 group of A37, together with TsaE and TsaB. TsaD likely plays a direct catalytic role in this reaction. In Borreliella burgdorferi (strain ZS7) (Borrelia burgdorferi), this protein is tRNA N6-adenosine threonylcarbamoyltransferase.